The chain runs to 824 residues: Spindle-defective protein 2 (824 aa).

2 stretches are compositionally biased toward acidic residues: residues 16–27 (EIEDSPIDDNDN) and 35–44 (GDVELEEEEV). Residues 16–98 (EIEDSPIDDN…SRPASVMSDK (83 aa)) form a disordered region. The segment covering 59–70 (TNMTNPKVNDLT) has biased composition (polar residues). Over residues 81-98 (SAASSRSASRPASVMSDK) the composition is skewed to low complexity. The stretch at 111–131 (ENAIEEYTNQVFADENKADLL) forms a coiled coil. Residues 189–252 (RAKPGANDNE…GQYQGPNFDL (64 aa)) form a disordered region. The segment covering 207–225 (NVPTTSDKSAFITSPMNST) has biased composition (polar residues). Residues 304–324 (NNKNQDLFAALEEARKRRAAQ) adopt a coiled-coil conformation. Disordered stretches follow at residues 342–372 (KPTS…LTTS) and 433–455 (NNGN…VRTM). Low complexity predominate over residues 349 to 366 (SGNVVSSTSNDNTTAASS).

As to quaternary structure, interacts with sas-7 (via C-terminus); may be recruited to centrioles by sas-7.

It localises to the cytoplasm. The protein localises to the cytoskeleton. The protein resides in the microtubule organizing center. Its subcellular location is the centrosome. It is found in the centriole. In terms of biological role, required both for centrosome duplication and maturation. Required for pericentriolar material (PCM) recruitment. The protein is Spindle-defective protein 2 of Caenorhabditis elegans.